A 269-amino-acid polypeptide reads, in one-letter code: MADDEKKAAAPAAAPAAAAKPAAPAAAPAANGKAAPAANGKAAPAAAAAPAGPPKDPNDPKVKAEEAKKAKQAEIERKRAEVRKRMEEASKAKKAKKGFMTPERKKKLRLLLRKKAAEELKKEQERKAAERRRIIEERCGSPRNLSDASEGELQEICEEYYERMYICEGQKWDLEYEVRKKDWEINDLNAQVNDLRGKFVKPALKKVSKYENKFAKLQKKAAEFNFRNQLKVVKKKEFTLEEEEKEKKPDWSKGKPGDAKVKEEVEAEA.

Residues M1 to R104 are disordered. At A2 the chain carries N-acetylalanine. Residues A9–P50 show a composition bias toward low complexity. The span at D56–K91 shows a compositional bias: basic and acidic residues. Residues E162–K171 form a troponin T-interaction region. Residues N189–P202 are actin-binding. 2 positions are modified to N6,N6,N6-trimethyllysine: K201 and K205. The tract at residues T239–A269 is disordered.

The protein belongs to the troponin I family. As to quaternary structure, binds to actin and tropomyosin. In terms of tissue distribution, all isoforms are expressed in somatic muscle. Isoforms containing exon 6a1 (isoforms 1 and 2) are expressed in all muscles but highest expression is in abdominal muscle and splanchnic muscle of the gut. Isoforms containing exon 6b1 (isoforms 5, 6, 9 and 10) are highly expressed in the tergal depressor of trochanter (TDT) muscle.

Functionally, troponin I is the ATPase inhibitory subunit of troponin in the thin filament regulatory complex. Involved in the development and maintenance of muscle and nervous system. May also be involved in the cytoskeletal apparatus. This chain is Troponin I (wupA), found in Drosophila melanogaster (Fruit fly).